The following is a 583-amino-acid chain: 2-succinyl-5-enolpyruvyl-6-hydroxy-3-cyclohexene-1-carboxylate synthase (583 aa).

The protein belongs to the TPP enzyme family. MenD subfamily. In terms of assembly, homodimer. Requires Mg(2+) as cofactor. The cofactor is Mn(2+). Thiamine diphosphate is required as a cofactor.

It carries out the reaction isochorismate + 2-oxoglutarate + H(+) = 5-enolpyruvoyl-6-hydroxy-2-succinyl-cyclohex-3-ene-1-carboxylate + CO2. Its pathway is quinol/quinone metabolism; 1,4-dihydroxy-2-naphthoate biosynthesis; 1,4-dihydroxy-2-naphthoate from chorismate: step 2/7. The protein operates within cofactor biosynthesis; phylloquinone biosynthesis. In terms of biological role, catalyzes the thiamine diphosphate-dependent decarboxylation of 2-oxoglutarate and the subsequent addition of the resulting succinic semialdehyde-thiamine pyrophosphate anion to isochorismate to yield 2-succinyl-5-enolpyruvyl-6-hydroxy-3-cyclohexene-1-carboxylate (SEPHCHC). The chain is 2-succinyl-5-enolpyruvyl-6-hydroxy-3-cyclohexene-1-carboxylate synthase from Trichormus variabilis (strain ATCC 29413 / PCC 7937) (Anabaena variabilis).